Consider the following 191-residue polypeptide: Peptidyl-tRNA hydrolase (191 aa).

Tyr-14 provides a ligand contact to tRNA. Residue His-19 is the Proton acceptor of the active site. TRNA contacts are provided by Tyr-64, Asn-66, and Asn-112.

Belongs to the PTH family. As to quaternary structure, monomer.

Its subcellular location is the cytoplasm. It carries out the reaction an N-acyl-L-alpha-aminoacyl-tRNA + H2O = an N-acyl-L-amino acid + a tRNA + H(+). In terms of biological role, hydrolyzes ribosome-free peptidyl-tRNAs (with 1 or more amino acids incorporated), which drop off the ribosome during protein synthesis, or as a result of ribosome stalling. Functionally, catalyzes the release of premature peptidyl moieties from peptidyl-tRNA molecules trapped in stalled 50S ribosomal subunits, and thus maintains levels of free tRNAs and 50S ribosomes. The protein is Peptidyl-tRNA hydrolase of Clostridium botulinum (strain Eklund 17B / Type B).